An 805-amino-acid chain; its full sequence is Leucine--tRNA ligase (805 aa).

Residues 40–51 (PYPSGSGLHVGH) carry the 'HIGH' region motif. Residues 576–580 (KMSKS) carry the 'KMSKS' region motif. Residue lysine 579 participates in ATP binding.

Belongs to the class-I aminoacyl-tRNA synthetase family.

The protein localises to the cytoplasm. It catalyses the reaction tRNA(Leu) + L-leucine + ATP = L-leucyl-tRNA(Leu) + AMP + diphosphate. The chain is Leucine--tRNA ligase from Chlorobium luteolum (strain DSM 273 / BCRC 81028 / 2530) (Pelodictyon luteolum).